Reading from the N-terminus, the 1105-residue chain is uncharacterized protein (1105 aa).

This sequence belongs to the mycobacterial PPE family.

This is an uncharacterized protein from Mycobacterium tuberculosis (strain CDC 1551 / Oshkosh).